A 238-amino-acid chain; its full sequence is Uridylate kinase (238 aa).

Position 10-13 (10-13) interacts with ATP; sequence KFSG. The interval 18 to 23 is involved in allosteric activation by GTP; it reads GGNGFG. Residue G52 participates in UMP binding. G53 and R57 together coordinate ATP. UMP is bound by residues D73 and 134 to 141; that span reads TGNPFFTT. Positions 161, 167, and 170 each coordinate ATP.

Belongs to the UMP kinase family. As to quaternary structure, homohexamer.

The protein localises to the cytoplasm. It carries out the reaction UMP + ATP = UDP + ADP. It functions in the pathway pyrimidine metabolism; CTP biosynthesis via de novo pathway; UDP from UMP (UMPK route): step 1/1. Its activity is regulated as follows. Allosterically activated by GTP. Inhibited by UTP. Functionally, catalyzes the reversible phosphorylation of UMP to UDP. The chain is Uridylate kinase from Campylobacter fetus subsp. fetus (strain 82-40).